Consider the following 157-residue polypeptide: Transcriptional repressor NrdR (157 aa).

Residues C3–C34 fold into a zinc finger. The 91-residue stretch at L46–D136 folds into the ATP-cone domain.

This sequence belongs to the NrdR family. It depends on Zn(2+) as a cofactor.

In terms of biological role, negatively regulates transcription of bacterial ribonucleotide reductase nrd genes and operons by binding to NrdR-boxes. This chain is Transcriptional repressor NrdR, found in Clavibacter sepedonicus (Clavibacter michiganensis subsp. sepedonicus).